We begin with the raw amino-acid sequence, 138 residues long: Nucleoside diphosphate kinase (138 aa).

Residues Lys9, Phe57, Arg85, Thr91, Arg102, and Asn112 each coordinate ATP. His115 functions as the Pros-phosphohistidine intermediate in the catalytic mechanism.

Belongs to the NDK family. As to quaternary structure, homotetramer. Requires Mg(2+) as cofactor.

The protein localises to the cytoplasm. It carries out the reaction a 2'-deoxyribonucleoside 5'-diphosphate + ATP = a 2'-deoxyribonucleoside 5'-triphosphate + ADP. The catalysed reaction is a ribonucleoside 5'-diphosphate + ATP = a ribonucleoside 5'-triphosphate + ADP. Its function is as follows. Major role in the synthesis of nucleoside triphosphates other than ATP. The ATP gamma phosphate is transferred to the NDP beta phosphate via a ping-pong mechanism, using a phosphorylated active-site intermediate. This chain is Nucleoside diphosphate kinase, found in Trichlorobacter lovleyi (strain ATCC BAA-1151 / DSM 17278 / SZ) (Geobacter lovleyi).